Consider the following 272-residue polypeptide: Ethanolamine ammonia-lyase small subunit (272 aa).

Adenosylcob(III)alamin contacts are provided by valine 161, glutamate 182, and cysteine 211.

Belongs to the EutC family. In terms of assembly, the basic unit is a heterodimer which dimerizes to form tetramers. The heterotetramers trimerize; 6 large subunits form a core ring with 6 small subunits projecting outwards. Requires adenosylcob(III)alamin as cofactor.

The protein localises to the bacterial microcompartment. The catalysed reaction is ethanolamine = acetaldehyde + NH4(+). It participates in amine and polyamine degradation; ethanolamine degradation. Catalyzes the deamination of various vicinal amino-alcohols to oxo compounds. Allows this organism to utilize ethanolamine as the sole source of nitrogen and carbon in the presence of external vitamin B12. The sequence is that of Ethanolamine ammonia-lyase small subunit from Pseudomonas putida (strain ATCC 47054 / DSM 6125 / CFBP 8728 / NCIMB 11950 / KT2440).